Here is a 644-residue protein sequence, read N- to C-terminus: Exoribonuclease 2 (644 aa).

An RNB domain is found at 189–516 (REDLTALDFV…NHRLLKAVIK (328 aa)). The S1 motif domain occupies 561 to 643 (DTRFAAEIVD…ETRSIIARPV (83 aa)).

It belongs to the RNR ribonuclease family. RNase II subfamily.

Its subcellular location is the cytoplasm. It catalyses the reaction Exonucleolytic cleavage in the 3'- to 5'-direction to yield nucleoside 5'-phosphates.. Involved in mRNA degradation. Hydrolyzes single-stranded polyribonucleotides processively in the 3' to 5' direction. This chain is Exoribonuclease 2, found in Escherichia coli O17:K52:H18 (strain UMN026 / ExPEC).